The following is a 198-amino-acid chain: Ras-related protein RabH (198 aa).

Position 14 to 21 (14 to 21 (GDWNVGKS)) interacts with GTP. The short motif at 36–44 (TKLSMGEHF) is the Effector region element. Residues 62 to 66 (DTSGM) and 120 to 123 (SKFD) each bind GTP. Cysteine methyl ester is present on cysteine 195. Cysteine 195 carries S-geranylgeranyl cysteine lipidation. A propeptide spans 196–198 (SIN) (removed in mature form).

This sequence belongs to the small GTPase superfamily. Rab family.

Its subcellular location is the cell membrane. In Dictyostelium discoideum (Social amoeba), this protein is Ras-related protein RabH (rabH).